The primary structure comprises 220 residues: Putative tyrosine-protein phosphatase 1 (220 aa).

In terms of domain architecture, Tyrosine-protein phosphatase spans 67–218 (FKVPLNAELF…LLARKHVRGQ (152 aa)).

The protein belongs to the protein-tyrosine phosphatase family. Non-receptor class CDC14 subfamily.

It carries out the reaction O-phospho-L-tyrosyl-[protein] + H2O = L-tyrosyl-[protein] + phosphate. Could be inactive as the active site cysteine is modified to tryptophan. This Orgyia pseudotsugata multicapsid polyhedrosis virus (OpMNPV) protein is Putative tyrosine-protein phosphatase 1 (PTP-1).